Here is a 321-residue protein sequence, read N- to C-terminus: Protease HtpX homolog (321 aa).

The next 2 helical transmembrane spans lie at 6 to 26 (TAML…LIGG) and 28 to 48 (GGMM…YWNS). His-130 contacts Zn(2+). Glu-131 is an active-site residue. A Zn(2+)-binding site is contributed by His-134. A run of 2 helical transmembrane segments spans residues 145 to 165 (ITAT…FFGG) and 173 to 193 (PLGF…AMLV). Glu-202 contacts Zn(2+). The interval 281-321 (EFSPRASTPPPSGDRPVRKSGSVPTTGWRRGNENERKGPWS) is disordered. Residues 310 to 321 (RGNENERKGPWS) are compositionally biased toward basic and acidic residues.

It belongs to the peptidase M48B family. Requires Zn(2+) as cofactor.

It is found in the cell inner membrane. In Agrobacterium fabrum (strain C58 / ATCC 33970) (Agrobacterium tumefaciens (strain C58)), this protein is Protease HtpX homolog.